The following is a 238-amino-acid chain: MEKEKVNDEKPDPENSLDFSEHFNQLELLETHGHLIPTGTQSLWIGNSDDDEEQDEKTEEWYQLQEKKMEKDPSKLLLWAAEKNRLTTVQRLLSERATHVNTRDEDKYTPLHRAAYNGHLDVVRELIAHGADVHAVTVDGWTPLHSACKWNNARVASFLLQHDADVNAQTKGLLTPLHLAAGNRDSKDTLELLLMNRYIKPGLKNSLEETAFDIARRTGIYHYLFEIVEGCTNCSPQS.

S48 bears the Phosphoserine mark. ANK repeat units lie at residues 77 to 105, 106 to 135, 139 to 168, and 172 to 205; these read LLWA…TRDE, DKYT…DVHA, DGWT…DVNA, and GLLT…GLKN.

It is found in the nucleus. May have a role in spermatogenesis where it promotes autophagy in response to serum starvation, via the NF-kappaB pathway. This is Ankyrin repeat domain-containing protein 49 (ANKRD49) from Bos taurus (Bovine).